We begin with the raw amino-acid sequence, 507 residues long: ATP synthase subunit alpha, chloroplastic (507 aa).

Residue 170–177 (GDRQTGKT) coordinates ATP.

The protein belongs to the ATPase alpha/beta chains family. As to quaternary structure, F-type ATPases have 2 components, CF(1) - the catalytic core - and CF(0) - the membrane proton channel. CF(1) has five subunits: alpha(3), beta(3), gamma(1), delta(1), epsilon(1). CF(0) has four main subunits: a, b, b' and c.

Its subcellular location is the plastid. The protein resides in the chloroplast thylakoid membrane. The enzyme catalyses ATP + H2O + 4 H(+)(in) = ADP + phosphate + 5 H(+)(out). Functionally, produces ATP from ADP in the presence of a proton gradient across the membrane. The alpha chain is a regulatory subunit. This chain is ATP synthase subunit alpha, chloroplastic, found in Solanum bulbocastanum (Wild potato).